We begin with the raw amino-acid sequence, 438 residues long: Minor capsid protein p49 (438 aa).

The interval 145-167 (NCLTQPSSLPSLKNPKNSSVPST) is disordered.

The protein belongs to the asfivirus p49 structural protein family.

The protein localises to the virion. In terms of biological role, together with the penton and the other minor capsid proteins (M1249L, p17), forms a complicated network immediately below the outer capsid shell, stabilizing the whole capsid. Plays an essential role in the formation of infectious virus particles. Especially required for the formation of the capsid vertices. During virion assembly, associates with the membrane and probably mediates the docking of the penton complex to the inner membrane, where it recruits the capsomers to form the penton core. This Ornithodoros (relapsing fever ticks) protein is Minor capsid protein p49.